Here is a 294-residue protein sequence, read N- to C-terminus: N-acetylmuramic acid 6-phosphate etherase (294 aa).

The region spanning 54-217 is the SIS domain; it reads VIQSFEEEGR…STASMIGVGK (164 aa). Glu-82 serves as the catalytic Proton donor. The active site involves Glu-113.

The protein belongs to the GCKR-like family. MurNAc-6-P etherase subfamily. Homodimer.

The enzyme catalyses N-acetyl-D-muramate 6-phosphate + H2O = N-acetyl-D-glucosamine 6-phosphate + (R)-lactate. It participates in amino-sugar metabolism; N-acetylmuramate degradation. Functionally, specifically catalyzes the cleavage of the D-lactyl ether substituent of MurNAc 6-phosphate, producing GlcNAc 6-phosphate and D-lactate. The polypeptide is N-acetylmuramic acid 6-phosphate etherase (Bacillus anthracis (strain A0248)).